The primary structure comprises 241 residues: Prolactin-8A8 (241 aa).

Residues 1–30 (MELQFRQPHFSDALLLLLLSNLLLWEKASS) form the signal peptide. Intrachain disulfides connect Cys-34/Cys-41, Cys-101/Cys-217, and Cys-234/Cys-241. Residue Asn-213 is glycosylated (N-linked (GlcNAc...) asparagine).

It belongs to the somatotropin/prolactin family. In terms of tissue distribution, expressed specifically in the placenta. Predominantly expressed in spongiotrophoblast cells.

The protein resides in the secreted. The chain is Prolactin-8A8 (Prl8a8) from Mus musculus (Mouse).